The sequence spans 473 residues: Photosystem II CP43 reaction center protein (473 aa).

Residues M1–E14 constitute a propeptide that is removed on maturation. An N-acetylthreonine modification is found at T15. T15 carries the phosphothreonine modification. A run of 5 helical transmembrane segments spans residues L69–A93, L134–N155, K178–T200, K255–S275, and W291–A312. Residue E367 coordinates [CaMn4O5] cluster. A helical membrane pass occupies residues R447–P471.

The protein belongs to the PsbB/PsbC family. PsbC subfamily. In terms of assembly, PSII is composed of 1 copy each of membrane proteins PsbA, PsbB, PsbC, PsbD, PsbE, PsbF, PsbH, PsbI, PsbJ, PsbK, PsbL, PsbM, PsbT, PsbX, PsbY, PsbZ, Psb30/Ycf12, at least 3 peripheral proteins of the oxygen-evolving complex and a large number of cofactors. It forms dimeric complexes. It depends on Binds multiple chlorophylls and provides some of the ligands for the Ca-4Mn-5O cluster of the oxygen-evolving complex. It may also provide a ligand for a Cl- that is required for oxygen evolution. PSII binds additional chlorophylls, carotenoids and specific lipids. as a cofactor.

It localises to the plastid. The protein localises to the chloroplast thylakoid membrane. Its function is as follows. One of the components of the core complex of photosystem II (PSII). It binds chlorophyll and helps catalyze the primary light-induced photochemical processes of PSII. PSII is a light-driven water:plastoquinone oxidoreductase, using light energy to abstract electrons from H(2)O, generating O(2) and a proton gradient subsequently used for ATP formation. The chain is Photosystem II CP43 reaction center protein from Abies alba (Edeltanne).